The chain runs to 165 residues: UPF0254 protein MmarC5_0742 (165 aa).

The protein belongs to the UPF0254 family.

This Methanococcus maripaludis (strain C5 / ATCC BAA-1333) protein is UPF0254 protein MmarC5_0742.